A 640-amino-acid chain; its full sequence is MGKIIGIDLGTTNSCVAVMQGTQPTVIENSEGNRTTPSMVAFTKSGDRLVGQAAKRQAITNPKNTIYSIKRFVGRKFDEVPNEKKLAPYDIVNEGGEARVKINDKAYSPQEISAMILQKMKQTAEDFLGEKVSEAVITVPAYFNDAQRQATKDAGRIAGLDVKRIINEPTAAALAYGLDKKQSSEKVAVFDLGGGTFDISILELGDGVFEVKSTDGDTHLGGDDFDQKIINFLADEFKKQEGIDLRNDAIALQRLKEAAEKAKVELSSRTDTEINLPFITATQEGPKHLVINLTRAKFEAMCSDLFDKILEPCHRAVKNSSVEIKDIDEVVLVGGSTRIPKVQALVKEFFGREPNKSVNPDEVVAVGAAIQGGVLKGDVTDVLLLDVSPLSLGIETLGGVMTRLIEANTTIPTRKQEVFSTAGDNQTSVEVHVLQGERPMASDNKTLGRFHLGDIPPAPRGLPQIEVTFDIDSNGILSVSAKDKATGKEQSIKIEASGKLSDAEIEKMKRDAKEHAAEDMKKKEEIDSKNAADGLIFSTEKQLAELGDKIPSDKRPALEGALEKLKDATKNGTTESIKNAMDELSKVWNDVSSNLYQAPGAETNASEPTQNTDGSGHTKKSGNDGEVENAEFEVIDGNGK.

A Phosphothreonine; by autocatalysis modification is found at Thr196. Positions 547–569 are enriched in basic and acidic residues; it reads GDKIPSDKRPALEGALEKLKDAT. Disordered stretches follow at residues 547–575 and 595–640; these read GDKIPSDKRPALEGALEKLKDATKNGTTE and LYQA…GNGK. The span at 603 to 615 shows a compositional bias: polar residues; sequence TNASEPTQNTDGS. Acidic residues predominate over residues 625-634; that stretch reads GEVENAEFEV.

This sequence belongs to the heat shock protein 70 family.

Acts as a chaperone. The chain is Chaperone protein DnaK from Chlorobium phaeobacteroides (strain DSM 266 / SMG 266 / 2430).